A 333-amino-acid chain; its full sequence is Protoheme IX farnesyltransferase (333 aa).

8 helical membrane-spanning segments follow: residues 63–83, 109–129, 132–152, 160–180, 188–208, 214–234, 245–265, and 292–312; these read LACT…LNCI, AAFI…VSGV, LAAG…TAIL, IVIG…AASG, WLFS…ALLL, AVGI…RAIS, GFGV…LIPF, and WSIF…LPMA.

It belongs to the UbiA prenyltransferase family. Protoheme IX farnesyltransferase subfamily.

The protein resides in the cell inner membrane. The enzyme catalyses heme b + (2E,6E)-farnesyl diphosphate + H2O = Fe(II)-heme o + diphosphate. Its pathway is porphyrin-containing compound metabolism; heme O biosynthesis; heme O from protoheme: step 1/1. Its function is as follows. Converts heme B (protoheme IX) to heme O by substitution of the vinyl group on carbon 2 of heme B porphyrin ring with a hydroxyethyl farnesyl side group. The chain is Protoheme IX farnesyltransferase from Prochlorococcus marinus (strain MIT 9313).